The chain runs to 222 residues: Uridine diphosphate glucose pyrophosphatase NUDT14 (222 aa).

Residues 38–206 enclose the Nudix hydrolase domain; sequence KTHDSVTILM…DVPKTLGVIF (169 aa). A Nudix box motif is present at residues 111-129; it reads PGLSLEEVACKEAWEECGY.

Belongs to the Nudix hydrolase family. In terms of assembly, homodimer. Mg(2+) is required as a cofactor.

Its subcellular location is the cytoplasm. It catalyses the reaction UDP-sugar + H2O = UMP + alpha-D-aldose 1-phosphate.. Functionally, hydrolyzes UDP-glucose to glucose 1-phosphate and UMP and ADP-ribose to ribose 5-phosphate and AMP. The physiological substrate is probably UDP-glucose. Poor activity on other substrates such as ADP-glucose, CDP-glucose, GDP-glucose and GDP-mannose. The protein is Uridine diphosphate glucose pyrophosphatase NUDT14 (NUDT14) of Bos taurus (Bovine).